A 120-amino-acid polypeptide reads, in one-letter code: NAD(P)H-quinone oxidoreductase subunit 3, chloroplastic (120 aa).

3 helical membrane-spanning segments follow: residues 9–29 (IFWT…SISG), 64–84 (MFAL…PWAM), and 88–108 (VLGV…VVGL).

Belongs to the complex I subunit 3 family. In terms of assembly, NDH is composed of at least 16 different subunits, 5 of which are encoded in the nucleus.

The protein resides in the plastid. Its subcellular location is the chloroplast thylakoid membrane. The enzyme catalyses a plastoquinone + NADH + (n+1) H(+)(in) = a plastoquinol + NAD(+) + n H(+)(out). The catalysed reaction is a plastoquinone + NADPH + (n+1) H(+)(in) = a plastoquinol + NADP(+) + n H(+)(out). Its function is as follows. NDH shuttles electrons from NAD(P)H:plastoquinone, via FMN and iron-sulfur (Fe-S) centers, to quinones in the photosynthetic chain and possibly in a chloroplast respiratory chain. The immediate electron acceptor for the enzyme in this species is believed to be plastoquinone. Couples the redox reaction to proton translocation, and thus conserves the redox energy in a proton gradient. The polypeptide is NAD(P)H-quinone oxidoreductase subunit 3, chloroplastic (Hordeum vulgare (Barley)).